Reading from the N-terminus, the 337-residue chain is Phosphatidate cytidylyltransferase, mitochondrial (337 aa).

It belongs to the TAM41 family. Requires Mg(2+) as cofactor. Brain and liver.

It localises to the mitochondrion inner membrane. It carries out the reaction a 1,2-diacyl-sn-glycero-3-phosphate + CTP + H(+) = a CDP-1,2-diacyl-sn-glycerol + diphosphate. It participates in phospholipid metabolism; CDP-diacylglycerol biosynthesis; CDP-diacylglycerol from sn-glycerol 3-phosphate: step 3/3. Catalyzes the conversion of phosphatidic acid (PA) to CDP-diacylglycerol (CDP-DAG), an essential intermediate in the synthesis of phosphatidylglycerol, cardiolipin and phosphatidylinositol. The chain is Phosphatidate cytidylyltransferase, mitochondrial (Tamm41) from Rattus norvegicus (Rat).